A 190-amino-acid polypeptide reads, in one-letter code: Shikimate kinase (190 aa).

14–19 (GAGKST) is a binding site for ATP. S18 provides a ligand contact to Mg(2+). Substrate contacts are provided by D36, R60, and G82. An ATP-binding site is contributed by R120. Residue R139 participates in substrate binding.

It belongs to the shikimate kinase family. Monomer. It depends on Mg(2+) as a cofactor.

It localises to the cytoplasm. It catalyses the reaction shikimate + ATP = 3-phosphoshikimate + ADP + H(+). It functions in the pathway metabolic intermediate biosynthesis; chorismate biosynthesis; chorismate from D-erythrose 4-phosphate and phosphoenolpyruvate: step 5/7. In terms of biological role, catalyzes the specific phosphorylation of the 3-hydroxyl group of shikimic acid using ATP as a cosubstrate. This is Shikimate kinase from Thioalkalivibrio sulfidiphilus (strain HL-EbGR7).